The following is a 67-amino-acid chain: DNA-directed RNA polymerase subunit omega (67 aa).

Belongs to the RNA polymerase subunit omega family. The RNAP catalytic core consists of 2 alpha, 1 beta, 1 beta' and 1 omega subunit. When a sigma factor is associated with the core the holoenzyme is formed, which can initiate transcription.

The catalysed reaction is RNA(n) + a ribonucleoside 5'-triphosphate = RNA(n+1) + diphosphate. In terms of biological role, promotes RNA polymerase assembly. Latches the N- and C-terminal regions of the beta' subunit thereby facilitating its interaction with the beta and alpha subunits. This is DNA-directed RNA polymerase subunit omega from Nautilia profundicola (strain ATCC BAA-1463 / DSM 18972 / AmH).